Consider the following 474-residue polypeptide: MTQKLHIKTWGCQMNEYDSSKMADLLQSTHGLELTEEAEQADVLLLNTCSIREKAQEKVFHQLGRWKELKKKNPNLVIGVGGCVASQEGEHIRERAPYVDIIFGPQTLHRLPEMINQIRAGEKAVLDISFPEIEKFDRLPEPKAEGPTAFVSIMEGCNKYCTYCVVPYTRGEEVSRPLDDVLFEIAQLAEQGVREVNLLGQNVNAYRGPTHDGGICSFAELLRLVAAIDGIDRLRFTTSNPIEFTDDIIDVYRDTPELVSFLHLPVQAGSDRILTMMKRGHTAIEYKSIIRKLRAVRPNIQISSDFIVGFPGETNEEFEQTMNLIQQVNFDMSFSFVYSARPGTPAADMPDDVTEEEKKQRLYILQQRINNQAAQFSRAMLGTEQRVLVEGPSKKDIMELTGRTENNRIVNFAGTPDMIGKFVDIKITDVFTNSLRGDVVRTEDQMGLRVVQSPQAVINRTRKEDELGVGRFGG.

One can recognise an MTTase N-terminal domain in the interval 3-120 (QKLHIKTWGC…LPEMINQIRA (118 aa)). [4Fe-4S] cluster is bound by residues Cys-12, Cys-49, Cys-83, Cys-157, Cys-161, and Cys-164. The region spanning 143-375 (KAEGPTAFVS…QQRINNQAAQ (233 aa)) is the Radical SAM core domain. The TRAM domain occupies 378 to 441 (RAMLGTEQRV…TNSLRGDVVR (64 aa)).

It belongs to the methylthiotransferase family. MiaB subfamily. In terms of assembly, monomer. It depends on [4Fe-4S] cluster as a cofactor.

The protein resides in the cytoplasm. It carries out the reaction N(6)-dimethylallyladenosine(37) in tRNA + (sulfur carrier)-SH + AH2 + 2 S-adenosyl-L-methionine = 2-methylsulfanyl-N(6)-dimethylallyladenosine(37) in tRNA + (sulfur carrier)-H + 5'-deoxyadenosine + L-methionine + A + S-adenosyl-L-homocysteine + 2 H(+). Its function is as follows. Catalyzes the methylthiolation of N6-(dimethylallyl)adenosine (i(6)A), leading to the formation of 2-methylthio-N6-(dimethylallyl)adenosine (ms(2)i(6)A) at position 37 in tRNAs that read codons beginning with uridine. In Mannheimia succiniciproducens (strain KCTC 0769BP / MBEL55E), this protein is tRNA-2-methylthio-N(6)-dimethylallyladenosine synthase.